We begin with the raw amino-acid sequence, 445 residues long: ATP-dependent protease ATPase subunit HslU (445 aa).

Residues Ile17, 59–64, Asp254, Glu319, and Arg391 each bind ATP; that span reads GVGKTE.

It belongs to the ClpX chaperone family. HslU subfamily. In terms of assembly, a double ring-shaped homohexamer of HslV is capped on each side by a ring-shaped HslU homohexamer. The assembly of the HslU/HslV complex is dependent on binding of ATP.

It is found in the cytoplasm. Functionally, ATPase subunit of a proteasome-like degradation complex; this subunit has chaperone activity. The binding of ATP and its subsequent hydrolysis by HslU are essential for unfolding of protein substrates subsequently hydrolyzed by HslV. HslU recognizes the N-terminal part of its protein substrates and unfolds these before they are guided to HslV for hydrolysis. This is ATP-dependent protease ATPase subunit HslU from Pseudomonas syringae pv. tomato (strain ATCC BAA-871 / DC3000).